The chain runs to 968 residues: Phosphoenolpyruvate carboxylase 3 (968 aa).

At serine 11 the chain carries Phosphoserine. Active-site residues include histidine 173 and lysine 603. At serine 705 the chain carries Phosphoserine.

This sequence belongs to the PEPCase type 1 family. Homotetramer. Mg(2+) serves as cofactor. In terms of tissue distribution, expressed in roots and siliques, and to a lower extent in stems, leaves and flowers.

Its subcellular location is the cytoplasm. The enzyme catalyses oxaloacetate + phosphate = phosphoenolpyruvate + hydrogencarbonate. With respect to regulation, by light-reversible phosphorylation. Its function is as follows. Through the carboxylation of phosphoenolpyruvate (PEP) it forms oxaloacetate, a four-carbon dicarboxylic acid source for the tricarboxylic acid cycle. The chain is Phosphoenolpyruvate carboxylase 3 (PPC3) from Arabidopsis thaliana (Mouse-ear cress).